A 75-amino-acid chain; its full sequence is uncharacterized protein (75 aa).

2 helical membrane passes run 7–26 (LINA…AASA) and 36–58 (MHLF…FCPV).

The protein localises to the cell membrane. This is an uncharacterized protein from Bacillus subtilis (strain 168).